A 237-amino-acid chain; its full sequence is LexA repressor (237 aa).

A compositionally biased stretch (polar residues) spans 1–12 (MPVKDSSSNKKN). The tract at residues 1–20 (MPVKDSSSNKKNQIGKLSER) is disordered. The H-T-H motif DNA-binding region spans 41–61 (IREIGDAAGLQSTSSVAYQLK). A compositionally biased stretch (basic and acidic residues) spans 67–80 (GYLRRDPNKPRAVD). The disordered stretch occupies residues 67–112 (GYLRRDPNKPRAVDVRALPDPIPSKPGRKPGPKKSSVAISPDPAET). Active-site for autocatalytic cleavage activity residues include S161 and K198.

It belongs to the peptidase S24 family. As to quaternary structure, homodimer.

It catalyses the reaction Hydrolysis of Ala-|-Gly bond in repressor LexA.. Its function is as follows. Represses a number of genes involved in the response to DNA damage (SOS response), including recA and lexA. In the presence of single-stranded DNA, RecA interacts with LexA causing an autocatalytic cleavage which disrupts the DNA-binding part of LexA, leading to derepression of the SOS regulon and eventually DNA repair. In Corynebacterium diphtheriae (strain ATCC 700971 / NCTC 13129 / Biotype gravis), this protein is LexA repressor.